The chain runs to 136 residues: uncharacterized protein (136 aa).

Helical transmembrane passes span 25 to 47 and 78 to 97; these read ILKA…PHAF and ITGA…LLTA.

It is found in the cell membrane. This is an uncharacterized protein from Bacillus subtilis (strain 168).